The sequence spans 203 residues: Large ribosomal subunit protein bL25 (203 aa).

It belongs to the bacterial ribosomal protein bL25 family. CTC subfamily. As to quaternary structure, part of the 50S ribosomal subunit; part of the 5S rRNA/L5/L18/L25 subcomplex. Contacts the 5S rRNA. Binds to the 5S rRNA independently of L5 and L18.

Its function is as follows. This is one of the proteins that binds to the 5S RNA in the ribosome where it forms part of the central protuberance. The sequence is that of Large ribosomal subunit protein bL25 from Rickettsia prowazekii (strain Madrid E).